The primary structure comprises 170 residues: Zinc finger matrin-type protein 5 (170 aa).

The C3H1-type zinc-finger motif lies at 51–79; the sequence is EQNKRPCRKFLLTGQCDFGSNCRFSHMSE. The disordered stretch occupies residues 150–170; that stretch reads PPSLRAPPPGGWPLQPSVQWG.

Component of the U11/U12 snRNPs that are part of the U12-type spliceosome.

It is found in the nucleus. This is Zinc finger matrin-type protein 5 (ZMAT5) from Bos taurus (Bovine).